A 481-amino-acid chain; its full sequence is Glutamine synthetase (481 aa).

The GS beta-grasp domain occupies 22–106; it reads NEVEFVDFRF…VFCDVYDVYK (85 aa). Residues 114 to 481 enclose the GS catalytic domain; that stretch reads PRSIAKKALQ…PFEFITTYSC (368 aa). The Mg(2+) site is built by Glu-139, Glu-141, Glu-223, and Glu-230. Residues 274–275 and Gly-275 each bind L-glutamate; that span reads NG. His-279 is a Mg(2+) binding site. Residues 281–283 and Ser-283 each bind ATP; that span reads HVS. Arg-331, Glu-337, and Arg-349 together coordinate L-glutamate. ATP-binding residues include Arg-349 and Arg-354. Glu-367 is a Mg(2+) binding site. L-glutamate is bound at residue Arg-369.

The protein belongs to the glutamine synthetase family. As to quaternary structure, oligomer of 12 subunits arranged in the form of two hexameric ring. It depends on Mg(2+) as a cofactor.

The protein localises to the cytoplasm. It carries out the reaction L-glutamate + NH4(+) + ATP = L-glutamine + ADP + phosphate + H(+). Its activity is regulated as follows. The activity of this enzyme could be controlled by adenylation under conditions of abundant glutamine. Its function is as follows. Catalyzes the ATP-dependent biosynthesis of glutamine from glutamate and ammonia. The sequence is that of Glutamine synthetase from Helicobacter pylori (strain ATCC 700392 / 26695) (Campylobacter pylori).